The sequence spans 451 residues: PTS system cellobiose-specific EIIC component (451 aa).

Residues 8 to 423 form the PTS EIIC type-3 domain; sequence LEDRVMPVAG…FIAFAIYYPF (416 aa). 10 helical membrane passes run 31 to 51, 72 to 92, 104 to 124, 138 to 158, 187 to 207, 227 to 247, 250 to 270, 293 to 313, 347 to 367, and 407 to 427; these read GIIL…VGFL, LLYP…FGVA, LSAG…QVPF, GIPV…LAIV, FVAL…RLIL, LSVL…VQLL, TGLH…LSLM, FFDL…ALTM, IVMN…LVVV, and ILQI…FSIW.

The protein localises to the cell membrane. Its function is as follows. The phosphoenolpyruvate-dependent sugar phosphotransferase system (sugar PTS), a major carbohydrate active transport system, catalyzes the phosphorylation of incoming sugar substrates concomitantly with their translocation across the cell membrane. The enzyme II CelABD PTS system is involved in cellobiose transport. This Geobacillus stearothermophilus (Bacillus stearothermophilus) protein is PTS system cellobiose-specific EIIC component.